A 268-amino-acid polypeptide reads, in one-letter code: CCAAT/enhancer-binding protein delta (268 aa).

3 disordered regions span residues 1–50, 98–132, and 152–223; these read MSAA…STTP, LELLQGGPTRPPGVGSIARGPLKREPDWGDGDAPG, and AAQP…QQKL. Ser2 bears the N-acetylserine mark. Lys120 participates in a covalent cross-link: Glycyl lysine isopeptide (Lys-Gly) (interchain with G-Cter in SUMO). Positions 155 to 173 are enriched in pro residues; that stretch reads PTPPTSPEPPRGSPGPSLA. Over residues 177–201 the composition is skewed to basic and acidic residues; the sequence is VREKGAGKRGPDRGSPEYRQRRERN. The bZIP domain occupies 191-254; sequence SPEYRQRRER…ASLRQFFKEL (64 aa). The interval 195-222 is basic motif; that stretch reads RQRRERNNIAVRKSRDKAKRRNQEMQQK. Positions 226–254 are leucine-zipper; that stretch reads LSAENEKLHQRVEQLTRDLASLRQFFKEL.

It belongs to the bZIP family. C/EBP subfamily. As to quaternary structure, binds DNA as a homodimer and as a heterodimer. Can form stable heterodimers with CEBPA, CEBPB and CEBPE. Directly interacts with SPI1/PU.1; this interaction does not affect DNA-binding properties of each partner. Interacts with PRDM16. As to expression, ubiquitously expressed.

The protein resides in the nucleus. In terms of biological role, transcription activator that recognizes two different DNA motifs: the CCAAT homology common to many promoters and the enhanced core homology common to many enhancers. Important transcription factor regulating the expression of genes involved in immune and inflammatory responses. Transcriptional activator that enhances IL6 transcription alone and as heterodimer with CEBPB. The polypeptide is CCAAT/enhancer-binding protein delta (Cebpd) (Rattus norvegicus (Rat)).